A 542-amino-acid polypeptide reads, in one-letter code: Dihydropyrimidinase (542 aa).

Histidine 62, histidine 64, and lysine 167 together coordinate Zn(2+). Residue lysine 167 is modified to N6-carboxylysine. Tyrosine 172 is a substrate binding site. The Zn(2+) site is built by histidine 199 and histidine 255. Serine 331 serves as a coordination point for substrate. Aspartate 358 is a Zn(2+) binding site. Asparagine 392 provides a ligand contact to substrate.

This sequence belongs to the metallo-dependent hydrolases superfamily. Hydantoinase/dihydropyrimidinase family. In terms of assembly, homotetramer. Zn(2+) serves as cofactor. Carboxylation allows a single lysine to coordinate two zinc ions.

The catalysed reaction is 5,6-dihydrouracil + H2O = 3-(carbamoylamino)propanoate + H(+). In terms of biological role, catalyzes the second step of the reductive pyrimidine degradation, the reversible hydrolytic ring opening of dihydropyrimidines. Can catalyze the ring opening of 5,6-dihydrouracil to N-carbamyl-alanine and of 5,6-dihydrothymine to N-carbamyl-amino isobutyrate. This chain is Dihydropyrimidinase (PYD2), found in Lachancea kluyveri (strain ATCC 58438 / CBS 3082 / BCRC 21498 / NBRC 1685 / JCM 7257 / NCYC 543 / NRRL Y-12651) (Yeast).